A 2311-amino-acid chain; its full sequence is C2 domain-containing protein 3 (2311 aa).

2 disordered regions span residues 447 to 511 (SDSS…TSRC) and 543 to 562 (GTAV…RPVR). A compositionally biased stretch (basic and acidic residues) spans 470–509 (IALDRGRHRDNSPSEYKEDAKQTKGNDSLRDSKTSEKSTS). 6 consecutive C2 domains span residues 508 to 666 (TSRC…SVTC), 751 to 888 (GNGG…TRLL), 952 to 1112 (LDPP…HRED), 1136 to 1303 (PSGL…SGWY), 1370 to 1505 (HKRE…TLAV), and 1581 to 1713 (KTEV…CGWY). A disordered region spans residues 939–964 (GTSQTAMPRPAHFLDPPLSSSQMGRP). Disordered stretches follow at residues 1536-1589 (PSNS…LLDA), 1955-1977 (SEAY…GSLN), 2036-2065 (MTDR…PVNP), 2084-2233 (NDPS…SNLL), and 2261-2292 (VREG…PKEE). Composition is skewed to basic and acidic residues over residues 1565–1589 (FEEK…LLDA) and 1955–1964 (SEAYEREGQR). The segment covering 2036–2047 (MTDRTSPWSSIL) has biased composition (polar residues). A compositionally biased stretch (basic and acidic residues) spans 2048 to 2059 (SERDSDSMDHPQ). A compositionally biased stretch (polar residues) spans 2084 to 2095 (NDPSSVLSSARS). Over residues 2138–2151 (AESEAESQEMDGDP) the composition is skewed to acidic residues. Residues 2221 to 2233 (GSESPQVPPSNLL) are compositionally biased toward polar residues.

The protein resides in the cytoplasm. Its subcellular location is the cytoskeleton. The protein localises to the cilium basal body. It localises to the microtubule organizing center. It is found in the centrosome. The protein resides in the centriole. Its function is as follows. Component of the centrioles that acts as a positive regulator of centriole elongation. Promotes assembly of centriolar distal appendage, a structure at the distal end of the mother centriole that acts as an anchor of the cilium. Required for primary cilium formation. The sequence is that of C2 domain-containing protein 3 (c2cd3) from Xenopus tropicalis (Western clawed frog).